The primary structure comprises 577 residues: MLFSKLFAPTLKEPPKDAVLKSHKHLAQAGYIYQVGSGIYNFLPLAKKVLDKIENITHKRMQEHGAQNILMSFVVLASLWEKSGRLDKYGKELLVFKDRKDNDFVLSPTLEENITEIAANFIKSYKQLPVHLYQIHTKFRDEIRPRFGLVRAREFIMKDGYSFHEDAESLDKEFLNTQSAYKEILNDLGLDFRIVEADSGAIGGSKSKEFVVLTECGEDTIVVCKNCDYAANIEIAKRSKRPEPLNVPKAQLAKFPTPNTTSAQSVAEFFKTEPYFVLKALVRKVIHKDKETLACFFVRGDDNLEEVKALNALNIIGANALELREASQKDLDSAGLIAGFIGPYGLKKHVPYIIFDEDLKEGDCLITGANEKDFHAVGVDLKGFENLVYADIVQVKESDHCPNCQGALKYHKSLEVGHIFKLGQGYAKSLRASFLDKNGKEQFFEMGCYGIGISRLLSAILEQKSDDLGCVWTKNTAPFDVVIVVSNWKDEAQKKLAFEVYERLLQKGVDALLDDRDARFGAKMRDFELIGERLALIIGKQTLENKEFECIKRANLEKQTIKDIELEEKILEMLASE.

The protein belongs to the class-II aminoacyl-tRNA synthetase family. ProS type 1 subfamily. In terms of assembly, homodimer.

Its subcellular location is the cytoplasm. It carries out the reaction tRNA(Pro) + L-proline + ATP = L-prolyl-tRNA(Pro) + AMP + diphosphate. In terms of biological role, catalyzes the attachment of proline to tRNA(Pro) in a two-step reaction: proline is first activated by ATP to form Pro-AMP and then transferred to the acceptor end of tRNA(Pro). As ProRS can inadvertently accommodate and process non-cognate amino acids such as alanine and cysteine, to avoid such errors it has two additional distinct editing activities against alanine. One activity is designated as 'pretransfer' editing and involves the tRNA(Pro)-independent hydrolysis of activated Ala-AMP. The other activity is designated 'posttransfer' editing and involves deacylation of mischarged Ala-tRNA(Pro). The misacylated Cys-tRNA(Pro) is not edited by ProRS. The polypeptide is Proline--tRNA ligase (Helicobacter pylori (strain HPAG1)).